The following is a 152-amino-acid chain: Protein SprT-like (152 aa).

In terms of domain architecture, SprT-like spans glutamine 7 to isoleucine 148. Residue histidine 67 coordinates Zn(2+). Glutamate 68 is a catalytic residue. Histidine 71 is a Zn(2+) binding site.

Belongs to the SprT family. It depends on Zn(2+) as a cofactor.

It localises to the cytoplasm. The sequence is that of Protein SprT-like from Bacillus cereus (strain AH187).